Reading from the N-terminus, the 684-residue chain is Fidgetin-like protein 2 (684 aa).

Over residues 27–41 (PEQHLDVSSTTSSPA) the composition is skewed to polar residues. 3 disordered regions span residues 27–48 (PEQHLDVSSTTSSPAHKSELYS), 99–179 (PGAF…PHSS), and 292–403 (LDEE…SDPM). A compositionally biased stretch (low complexity) spans 160–179 (SNLSDSGYSGSSSCSGPHSS). Ala-431 is an ATP binding site.

The protein belongs to the AAA ATPase family. It depends on Mg(2+) as a cofactor. As to expression, highly expressed in vascular endothelial cells and neuronal cells.

The protein resides in the cytoplasm. Its subcellular location is the cell cortex. It catalyses the reaction ATP + H2O = ADP + phosphate + H(+). Functionally, microtubule-severing enzyme that negatively regulates cell migration and wound healing. In migrating cells, targets dynamic microtubules (MTs) at the leading edge and severs them, thereby suppressing motility. Negative regulator of axon regeneration that suppresses axonal growth by selectively severing dynamic MTs in the distal axon shaft and growth cone. Contributes to proper cell branching during endothelial and neuronal development. This Danio rerio (Zebrafish) protein is Fidgetin-like protein 2 (fignl2).